A 464-amino-acid polypeptide reads, in one-letter code: MNALVALVGRPNVGKSTLFNRLTRSRDALVVDQPGVTRDRKYGLAHYGEQSFFVVDTGGVMEQESGIGRLMRAQAQLAIEEADVIFFLVDGREGLSSLDEEIAAWLRCAQKPLKLVINKAEGRDGDLVASEFYRLGLGEPIIISAQQGQGVGRLLEALLTLLPVLEREESEIQAKGLQFAVIGRPNVGKSTLVNRILGEERVLSSEIPGTTRDSISIPFRHHGKDYTLVDTAGIRRRSRILDKVEKFSVIQSLQSIAIAQVVILVIDAHDSVVEQDLHLAGVILESGKGVVIAVNKWDGLPLEQRQRVKTDLDRRLPFLVFARIHFISALHGSGVGDLFPSIDEAYQSANSHLPTGELNRALLAAVEKYPPPVVKGRRIKLRYAHQGGQNPPKIIIHGNQAEAVSANYRRYLINYFRNAFGLMGTPIALEFRTVKNPFKGRANILTQRQQQKRKRLVRFRKGRD.

2 EngA-type G domains span residues 3-166 (ALVA…PVLE) and 177-350 (LQFA…QSAN). GTP contacts are provided by residues 9 to 16 (GRPNVGKS), 56 to 60 (DTGGV), 118 to 121 (NKAE), 183 to 190 (GRPNVGKS), 230 to 234 (DTAGI), and 295 to 298 (NKWD). One can recognise a KH-like domain in the interval 351–435 (SHLPTGELNR…PIALEFRTVK (85 aa)).

This sequence belongs to the TRAFAC class TrmE-Era-EngA-EngB-Septin-like GTPase superfamily. EngA (Der) GTPase family. As to quaternary structure, associates with the 50S ribosomal subunit.

In terms of biological role, GTPase that plays an essential role in the late steps of ribosome biogenesis. This chain is GTPase Der, found in Nitrosococcus oceani (strain ATCC 19707 / BCRC 17464 / JCM 30415 / NCIMB 11848 / C-107).